Reading from the N-terminus, the 107-residue chain is U1-lycotoxin-Ls1a (107 aa).

Positions 1–20 (MMKVLVVVALLVTLISYSSS) are cleaved as a signal peptide. The propeptide occupies 21-41 (EGIDDLEADELLSLMANEQTR). 4 disulfides stabilise this stretch: Cys44/Cys59, Cys51/Cys68, Cys58/Cys86, and Cys70/Cys84.

Belongs to the neurotoxin 19 (CSTX) family. 04 (U1-Lctx) subfamily. Expressed by the venom gland.

It is found in the secreted. The chain is U1-lycotoxin-Ls1a from Lycosa singoriensis (Wolf spider).